We begin with the raw amino-acid sequence, 160 residues long: Large ribosomal subunit protein eL21A (160 aa).

Lysine 32 participates in a covalent cross-link: Glycyl lysine isopeptide (Lys-Gly) (interchain with G-Cter in ubiquitin).

This sequence belongs to the eukaryotic ribosomal protein eL21 family. As to quaternary structure, component of the large ribosomal subunit (LSU). Mature yeast ribosomes consist of a small (40S) and a large (60S) subunit. The 40S small subunit contains 1 molecule of ribosomal RNA (18S rRNA) and 33 different proteins (encoded by 57 genes). The large 60S subunit contains 3 rRNA molecules (25S, 5.8S and 5S rRNA) and 46 different proteins (encoded by 81 genes).

The protein resides in the cytoplasm. In terms of biological role, component of the ribosome, a large ribonucleoprotein complex responsible for the synthesis of proteins in the cell. The small ribosomal subunit (SSU) binds messenger RNAs (mRNAs) and translates the encoded message by selecting cognate aminoacyl-transfer RNA (tRNA) molecules. The large subunit (LSU) contains the ribosomal catalytic site termed the peptidyl transferase center (PTC), which catalyzes the formation of peptide bonds, thereby polymerizing the amino acids delivered by tRNAs into a polypeptide chain. The nascent polypeptides leave the ribosome through a tunnel in the LSU and interact with protein factors that function in enzymatic processing, targeting, and the membrane insertion of nascent chains at the exit of the ribosomal tunnel. This Saccharomyces cerevisiae (strain ATCC 204508 / S288c) (Baker's yeast) protein is Large ribosomal subunit protein eL21A.